A 261-amino-acid polypeptide reads, in one-letter code: 1-(5-phosphoribosyl)-5-[(5-phosphoribosylamino)methylideneamino] imidazole-4-carboxamide isomerase (261 aa).

Belongs to the HisA/HisF family.

Its subcellular location is the cytoplasm. It catalyses the reaction 1-(5-phospho-beta-D-ribosyl)-5-[(5-phospho-beta-D-ribosylamino)methylideneamino]imidazole-4-carboxamide = 5-[(5-phospho-1-deoxy-D-ribulos-1-ylimino)methylamino]-1-(5-phospho-beta-D-ribosyl)imidazole-4-carboxamide. The protein operates within amino-acid biosynthesis; L-histidine biosynthesis; L-histidine from 5-phospho-alpha-D-ribose 1-diphosphate: step 4/9. Its function is as follows. Catalyzes the isomerization of the aminoaldose moiety of ProFAR to the aminoketose of PRFAR. The polypeptide is 1-(5-phosphoribosyl)-5-[(5-phosphoribosylamino)methylideneamino] imidazole-4-carboxamide isomerase (Saccharomyces cerevisiae (strain ATCC 204508 / S288c) (Baker's yeast)).